Reading from the N-terminus, the 202-residue chain is High mobility group protein B3 (202 aa).

2 consecutive DNA-binding regions (HMG box) follow at residues 9–79 (PKGK…KDYG) and 93–161 (PKRP…ADYK). A cysteine sulfonic acid (-SO3H); alternate mark is found at Cys23 and Cys45. Cys23 and Cys45 are oxidised to a cystine. Positions 71 to 98 (YDREMKDYGPAKGGKKKKDPNAPKRPPS) are disordered. Cys104 carries the post-translational modification Cysteine sulfonic acid (-SO3H). The segment at 161–202 (KSKGKFDGAKGAATKAARKKVEEEDEEEEEDEEEEDEDDDDE) is disordered. The span at 183–202 (EEDEEEEEDEEEEDEDDDDE) shows a compositional bias: acidic residues.

This sequence belongs to the HMGB family. In terms of processing, reduction/oxidation of cysteine residues Cys-23, Cys-45 and Cys-104 and a possible intramolecular disulfide bond involving Cys-23 and Cys-45 give rise to different redox forms with specific functional activities in various cellular compartments: 1- fully reduced HMGB3 (HMGB3C23hC45hC104h), 2- disulfide HMGB3 (HMGB3C23-C45C104h) and 3- sulfonyl HMGB3 (HMGB3C23soC45soC104so).

It is found in the nucleus. Its subcellular location is the chromosome. The protein localises to the cytoplasm. In terms of biological role, multifunctional protein with various roles in different cellular compartments. May act in a redox sensitive manner. Associates with chromatin and binds DNA with a preference for non-canonical DNA structures such as single-stranded DNA. Can bend DNA and enhance DNA flexibility by looping thus providing a mechanism to promote activities on various gene promoters. Binds to the delta-1 crystallin/ASL1 enhancer. Proposed to be involved in the innate immune response to nucleic acids by acting as a cytoplasmic promiscuous immunogenic DNA/RNA sensor. This is High mobility group protein B3 (HMGB3) from Gallus gallus (Chicken).